Here is a 553-residue protein sequence, read N- to C-terminus: Copine-9 (553 aa).

C2 domains are found at residues 1-125 (MSLS…ERPL) and 132-255 (KCGT…FTVY). Ca(2+)-binding residues include D163, D169, D225, D227, and D233. The VWFA domain maps to 299-500 (NFTVAIDFTA…VQFVPFRDYV (202 aa)). The segment at 531–553 (TRDIQPRPPPPVSPNPTPAPEQP) is disordered. The span at 536-553 (PRPPPPVSPNPTPAPEQP) shows a compositional bias: pro residues.

The protein belongs to the copine family. Ca(2+) is required as a cofactor.

Probable calcium-dependent phospholipid-binding protein that may play a role in calcium-mediated intracellular processes. Plays a role in dendrite formation by melanocytes. This Mus musculus (Mouse) protein is Copine-9.